The following is a 418-amino-acid chain: MSDITVTNWAGNITYTAKELLRPHSLDALRALVADSARVRVLGSGHSFNEIAEPGDGGVLLSLAGLPSVVDVDTAARTVRVGGGVRYAELARVVHARGLALPNMASLPHISVAGSVATGTHGSGVGNGSLASVVREVELVTADGSTVVIARGDERFGGAVTSLGALGVVTSLTLDLEPAYEMEQHVFTELPLAGLDPATFETVMAAAYSVSLFTDWRAPGFRQVWLKRRTDRPLDGFPYAAPAAEKMHPVPGMPAVNCTEQFGVPGPWHERLPHFRAEFTPSSGAELQSEYLMPREHALAALHAMDAIRETLAPVLQTCEIRTVAADAQWLSPAYGRDTVAAHFTWVEDTAAVLPVVRRLEEALVPFAARPHWGKVFTVPAGELRALYPRLADFGALAGALDPAGKFTNAFVRGVLAG.

An FAD-binding PCMH-type domain is found at 13–179 (ITYTAKELLR…TSLTLDLEPA (167 aa)). Residues 41 to 47 (VLGSGHS), Ser-106, Ser-111, Gly-114, 118 to 121 (TGTH), and Val-169 contribute to the FAD site. The residue at position 46 (His-46) is a Pros-8alpha-FAD histidine. Ser-106 is a binding site for D-sorbitol. Xylitol is bound at residue Ser-106. Residues Glu-320, Arg-322, and Thr-345 each contribute to the D-sorbitol site. Xylitol contacts are provided by Glu-320, Arg-322, and Thr-345. Arg-322 lines the FAD pocket. His-372 is a binding site for FAD. Residue Lys-375 participates in D-sorbitol binding. Lys-375 serves as a coordination point for xylitol.

It belongs to the oxygen-dependent FAD-linked oxidoreductase family. Monomer. It depends on FAD as a cofactor.

The enzyme catalyses an alditol + O2 = an aldose + H2O2. The catalysed reaction is xylitol + O2 = D-xylose + H2O2. It catalyses the reaction D-sorbitol + O2 = D-glucose + H2O2. Oxidase that performs selective oxidation of the terminal primary hydroxyl group of several alditols, with a reduction of O2 to H2O2. Shows highest activity on xylitol and D-sorbitol, and a poor efficiency with D-mannitol and L-threitol. The polypeptide is Alditol oxidase (xyoA) (Streptomyces coelicolor (strain ATCC BAA-471 / A3(2) / M145)).